We begin with the raw amino-acid sequence, 184 residues long: Ribosome-recycling factor (184 aa).

Belongs to the RRF family.

It localises to the cytoplasm. Its function is as follows. Responsible for the release of ribosomes from messenger RNA at the termination of protein biosynthesis. May increase the efficiency of translation by recycling ribosomes from one round of translation to another. The protein is Ribosome-recycling factor of Borrelia garinii subsp. bavariensis (strain ATCC BAA-2496 / DSM 23469 / PBi) (Borreliella bavariensis).